The primary structure comprises 145 residues: Superoxide dismutase [Mn/Fe] (145 aa).

Positions 10 and 64 each coordinate Fe(3+). Residues H10 and H64 each contribute to the Mn(2+) site.

This sequence belongs to the iron/manganese superoxide dismutase family. The cofactor is Mn(2+). It depends on Fe(3+) as a cofactor.

The catalysed reaction is 2 superoxide + 2 H(+) = H2O2 + O2. Functionally, destroys superoxide anion radicals which are normally produced within the cells and which are toxic to biological systems. Catalyzes the dismutation of superoxide anion radicals into O2 and H2O2 by successive reduction and oxidation of the transition metal ion at the active site. The polypeptide is Superoxide dismutase [Mn/Fe] (sodA) (Streptococcus acidominimus).